Reading from the N-terminus, the 316-residue chain is BTB/POZ domain-containing adapter for CUL3-mediated RhoA degradation protein 2 (316 aa).

The 69-residue stretch at 28–96 (KYVQLNVGGS…LRDDTVTLPQ (69 aa)) folds into the BTB domain. The segment covering 268–279 (EATSRSRSQASP) has biased composition (polar residues). Residues 268-287 (EATSRSRSQASPSEDEDTFE) are disordered. Position 278 is a phosphoserine (S278). S280 carries the post-translational modification Phosphoserine; by CK2.

This sequence belongs to the BACURD family. In terms of assembly, component of the BCR(TNFAIP1) E3 ubiquitin ligase complex, at least composed of CUL3, TNFAIP1/BACURD2 and RBX1. Interacts with RHOA; with a preference for RhoA-GDP. Interacts with RHOB. Interacts with CSNK2B. Interacts with PCNA. In terms of processing, phosphorylation at Ser-280 by CK2 facilitates the nucleus localization and increases interaction with PCNA.

Its subcellular location is the cytoplasm. It is found in the nucleus. The protein resides in the endosome. It functions in the pathway protein modification; protein ubiquitination. Substrate-specific adapter of a BCR (BTB-CUL3-RBX1) E3 ubiquitin-protein ligase complex involved in regulation of cytoskeleton structure. The BCR(TNFAIP1) E3 ubiquitin ligase complex mediates the ubiquitination of RHOA, leading to its degradation by the proteasome, thereby regulating the actin cytoskeleton and cell migration. Its interaction with RHOB may regulate apoptosis. May enhance the PCNA-dependent DNA polymerase delta activity. In Rattus norvegicus (Rat), this protein is BTB/POZ domain-containing adapter for CUL3-mediated RhoA degradation protein 2 (Tnfaip1).